We begin with the raw amino-acid sequence, 588 residues long: Protein kintoun (588 aa).

Disordered stretches follow at residues 199-223, 338-498, and 510-535; these read PGYE…PENS, PPLE…SSQE, and AANV…ADED. Residues 202–212 are compositionally biased toward basic and acidic residues; the sequence is EAKEPPEERDL. The span at 350-361 shows a compositional bias: polar residues; that stretch reads PNPTSDPQNENQ. 2 stretches are compositionally biased toward basic and acidic residues: residues 362 to 382 and 393 to 433; these read TRVE…HQRG and QVLE…KFEL. Residues 435–447 are compositionally biased toward polar residues; it reads DVQQENKGNCSNT. Residues 448-460 show a composition bias toward basic and acidic residues; sequence KEVKCCRRTKDSL.

This sequence belongs to the PIH1 family. Kintoun subfamily.

It localises to the cytoplasm. The protein localises to the dynein axonemal particle. Functionally, required for cytoplasmic pre-assembly of axonemal dyneins, thereby playing a central role in motility in cilia and flagella. Involved in pre-assembly of dynein arm complexes in the cytoplasm before intraflagellar transport loads them for the ciliary compartment. The sequence is that of Protein kintoun from Oryzias latipes (Japanese rice fish).